The sequence spans 161 residues: Regulator of ribonuclease activity A (161 aa).

This sequence belongs to the RraA family. In terms of assembly, homotrimer. Binds to both RNA-binding sites in the C-terminal region of Rne and to RhlB.

It is found in the cytoplasm. Functionally, globally modulates RNA abundance by binding to RNase E (Rne) and regulating its endonucleolytic activity. Can modulate Rne action in a substrate-dependent manner by altering the composition of the degradosome. Modulates RNA-binding and helicase activities of the degradosome. This Salmonella choleraesuis (strain SC-B67) protein is Regulator of ribonuclease activity A.